Here is a 537-residue protein sequence, read N- to C-terminus: Cryptic loci regulator 2 (537 aa).

A disordered region spans residues 96-116 (VSARHVRPNPKSSKDTLEKQP). A compositionally biased stretch (basic and acidic residues) spans 107 to 116 (SSKDTLEKQP).

In terms of assembly, interacts with clr3.

Its subcellular location is the nucleus. It localises to the chromosome. It is found in the centromere. The protein localises to the telomere. Functionally, required for deacetylation in the mating-type region and the centromere. Acts upstream of the histone deacetylases to promote transcriptional silencing. Required for proper positioning of nucleosomes at heterochromatic loci and for transcriptional gene silencing (TGS) function of the Snf2/Hdac-containing repressor complex (SHREC). This is Cryptic loci regulator 2 (clr2) from Schizosaccharomyces pombe (strain 972 / ATCC 24843) (Fission yeast).